Reading from the N-terminus, the 157-residue chain is uncharacterized protein (157 aa).

Positions 1–19 (MRKYLIILVLLLFLSSSFG) are cleaved as a signal peptide.

This is an uncharacterized protein from Methanocaldococcus jannaschii (strain ATCC 43067 / DSM 2661 / JAL-1 / JCM 10045 / NBRC 100440) (Methanococcus jannaschii).